Here is a 451-residue protein sequence, read N- to C-terminus: Trimethylamine monooxygenase (451 aa).

FAD contacts are provided by serine 12, glutamate 37, glutamine 39, leucine 45, tryptophan 46, and histidine 62. NADP(+) is bound by residues tryptophan 70 and asparagine 72. FAD is bound by residues asparagine 72 and valine 125. NADP(+) contacts are provided by serine 204, serine 205, serine 207, and arginine 228. FAD-binding residues include glutamine 317 and threonine 320. Arginine 411 lines the NADP(+) pocket.

This sequence belongs to the FMO family. FAD serves as cofactor.

The enzyme catalyses trimethylamine + NADPH + O2 = trimethylamine N-oxide + NADP(+) + H2O. Its function is as follows. Catalyzes the oxidation of trimethylamine (TMA) to produce trimethylamine N-oxide (TMAO). In vitro, has a broad substrate specificity, oxidizing many nitrogen- and sulfur-containing compounds, including dimethylamine (DMA), dimethylsulfide (DMS), dimethylsulfoxide (DMSO), cysteamine, methimazole and dimethylaniline. The sequence is that of Trimethylamine monooxygenase from Methylocella silvestris (strain DSM 15510 / CIP 108128 / LMG 27833 / NCIMB 13906 / BL2).